Consider the following 307-residue polypeptide: Putative flagellar export/assembly protein LafU (307 aa).

The helical transmembrane segment at 32 to 54 (AWKVAFADFTLAMMALFMTLWIV) threads the bilayer. The interval 87–108 (SPSHPPKPATVAAPEETEKKAR) is disordered. The region spanning 154–272 (LRVLIKDDQN…RIEIMVLTKS (119 aa)) is the OmpA-like domain.

It belongs to the MotB family.

The protein localises to the cell inner membrane. Its function is as follows. Part of the flagellar gene cluster Flag-2. However, the Flag-2 flagellar system could be inactive in strain 042 due to a frameshift in lfgC. The protein is Putative flagellar export/assembly protein LafU of Escherichia coli O44:H18 (strain 042 / EAEC).